Consider the following 490-residue polypeptide: MRIAILGRPNVGKSSLFNRLCRRSLAIVNSQEGTTRDRLYGEIRAWDSIIHVIDTGGVDQESTDRFQKQIHQQALAAAEEASVLLLVVDIRCGITKQDEELAKRLLPLKKPLILVMNKADSQQDLQRIHEFYGLGISDMIATSASHDKHIDLLLERIRQIAQIPVPSVEEQDVVQEDELPSEEAAISLHAFADETLFENESLSQEEASFLEELVAQTATPAPVDRPLKVALIGHPNVGKSSIINALLKEERCITDNSPGTTRDNIDVAYTHNNKEYVFIDTAGLRKTKSIKNSVEWMSSSRTEKAISRTDICLLVIDATQQLSYQDKRILSMIARYKKPHVILVNKWDLMFGVRMEHYVQDLRKMDPYIGQAHILCISAKQRRNLLQIFSAIDDIYTIATTKLSTSLVNKVLASAMQRHHPQVINGKRLRIYYAIHKTTTPFTFLLFINSNSLLTKPYELYLKNTLKAAFNLYRVPFDLEYKAKPARKSN.

2 EngA-type G domains span residues 1-165 and 227-400; these read MRIA…QIPV and LKVA…TIAT. GTP is bound by residues 7–14, 54–58, 117–120, 233–240, 280–284, and 345–348; these read GRPNVGKS, DTGGV, NKAD, GHPNVGKS, DTAGL, and NKWD. Residues 401-485 form the KH-like domain; that stretch reads TKLSTSLVNK…PFDLEYKAKP (85 aa).

This sequence belongs to the TRAFAC class TrmE-Era-EngA-EngB-Septin-like GTPase superfamily. EngA (Der) GTPase family. Associates with the 50S ribosomal subunit.

Its function is as follows. GTPase that plays an essential role in the late steps of ribosome biogenesis. In Chlamydia trachomatis serovar L2b (strain UCH-1/proctitis), this protein is GTPase Der.